A 170-amino-acid chain; its full sequence is Peptide methionine sulfoxide reductase MsrA (170 aa).

The active site involves cysteine 14.

The protein belongs to the MsrA Met sulfoxide reductase family.

It carries out the reaction L-methionyl-[protein] + [thioredoxin]-disulfide + H2O = L-methionyl-(S)-S-oxide-[protein] + [thioredoxin]-dithiol. It catalyses the reaction [thioredoxin]-disulfide + L-methionine + H2O = L-methionine (S)-S-oxide + [thioredoxin]-dithiol. Functionally, has an important function as a repair enzyme for proteins that have been inactivated by oxidation. Catalyzes the reversible oxidation-reduction of methionine sulfoxide in proteins to methionine. The polypeptide is Peptide methionine sulfoxide reductase MsrA (Streptomyces avermitilis (strain ATCC 31267 / DSM 46492 / JCM 5070 / NBRC 14893 / NCIMB 12804 / NRRL 8165 / MA-4680)).